Here is a 511-residue protein sequence, read N- to C-terminus: MSKKFTMTLLSSSLAGLLVMSGGVSAQNGTYSVLQDDSQKSGPVKYGSTYEVVKTVDNGNFRYEVKEKKNDKRTLFKFDSEGNVTVKGKGITHTLHDPALKDFARTAEGKKNEQNGNTPPHKLTDSAVRGVYNKVYGLEKTEITGFSVEDGENGKVSLGSDAKASGEFSVAVGNGARATEKASTAVGSWAAADGKQSTALGVGTYAYANASTALGSVAFVDNTATYGTAAGNRAKVDKDATEGTALGAKATVTNKNSVALGANSVTTRDNEVYIGYKTGTESDKTYGTRVLGGLSDGTRNSDAATVGQLNRKVGGVYDDVKARITVESEKQKKYTDQKTSEVNEKVEARTTVGVDSDGKLTRAEGATKTIAVNDGLVALSGRTDRIDYAVGAIDGRVTRNTQSIEKNSKAIAANTRTLQQHSARLDSQQRQINENHKEMKRAAAQSAALTGLFQPYSVGKFNATAAVGGYSDQQALAVGVGYRFNEQTAAKAGVAFSDGDASWNVGVNFEF.

A signal peptide spans 1-26 (MSKKFTMTLLSSSLAGLLVMSGGVSA). The interval 27–417 (QNGTYSVLQD…SKAIAANTRT (391 aa)) is surface exposed passenger domain. Residues 27 to 460 (QNGTYSVLQD…GLFQPYSVGK (434 aa)) lie on the Extracellular side of the membrane. Positions 161-287 (DAKASGEFSV…TGTESDKTYG (127 aa)) are head domain. Residues 288 to 303 (TRVLGGLSDGTRNSDA) are neck. Positions 304-349 (ATVGQLNRKVGGVYDDVKARITVESEKQKKYTDQKTSEVNEKVEAR) are right-handed coiled-coil (RHcc). Residues 304–349 (ATVGQLNRKVGGVYDDVKARITVESEKQKKYTDQKTSEVNEKVEAR) adopt a coiled-coil conformation. Residues 329 to 344 (EKQKKYTDQKTSEVNE) are required to bind IgA. Residues 350–375 (TTVGVDSDGKLTRAEGATKTIAVNDG) are saddle domain. Residues 376-441 (LVALSGRTDR…INENHKEMKR (66 aa)) are a coiled coil. A left-handed coiled-coil (LHcc) region spans residues 376–441 (LVALSGRTDR…INENHKEMKR (66 aa)). The segment at 384-418 (DRIDYAVGAIDGRVTRNTQSIEKNSKAIAANTRTL) is required to bind IgG. The tract at residues 418-460 (LQQHSARLDSQQRQINENHKEMKRAAAQSAALTGLFQPYSVGK) is outer membrane translocation of the passenger domain. 4 beta stranded membrane-spanning segments follow: residues 461-471 (FNATAAVGGYS), 474-485 (QALAVGVGYRFN), 488-497 (TAAKAGVAFS), and 501-511 (ASWNVGVNFEF). The translocator domain stretch occupies residues 461–511 (FNATAAVGGYSDQQALAVGVGYRFNEQTAAKAGVAFSDGDASWNVGVNFEF).

The protein belongs to the autotransporter-2 (AT-2) (TC 1.B.40) family. Eib subfamily. In terms of assembly, homotrimer; can probably form mixed heterotrimers in vivo. Will form mixed heterotrimers with EibA or EibC; these are correctly located in the outer membrane and bind IgG Fc, although less well than homotrimers. In denaturing gels runs as a band of about 210 kDa. Binds the Fc portion of immunoglobulins; binds more than 1 Fc per subunit, can be modeled to bind 3 Fc per trimer.

It is found in the cell surface. The protein resides in the cell outer membrane. Its function is as follows. Binds (in a non-immune fashion) to the Fc portion of human IgA and IgG; binding occurs on the cell surface. Confers the ability to survive exposure to human serum exposure. Binds to the Fc portion of human IgG, IgA and to whole mouse antibodies also via Fc. Upon overexpression cells acquire an extra cell surface layer that forms a zipper-like contact between cells; cells autoagglutinate and form biofilm more readily, suggesting it may play a role in defense against a host. The chain is Immunoglobulin-binding protein EibD from Escherichia coli.